A 296-amino-acid polypeptide reads, in one-letter code: NAD kinase (296 aa).

Aspartate 72 acts as the Proton acceptor in catalysis. NAD(+)-binding positions include 72 to 73 (DG), 146 to 147 (ND), arginine 157, arginine 174, aspartate 176, 187 to 192 (TAYALS), and glutamine 247.

It belongs to the NAD kinase family. The cofactor is a divalent metal cation.

The protein localises to the cytoplasm. It catalyses the reaction NAD(+) + ATP = ADP + NADP(+) + H(+). Functionally, involved in the regulation of the intracellular balance of NAD and NADP, and is a key enzyme in the biosynthesis of NADP. Catalyzes specifically the phosphorylation on 2'-hydroxyl of the adenosine moiety of NAD to yield NADP. The sequence is that of NAD kinase from Hahella chejuensis (strain KCTC 2396).